The sequence spans 522 residues: Penicillin-sensitive carboxypeptidase A (522 aa).

Ser-94 serves as the catalytic Acyl-ester intermediate. Lys-97 functions as the Proton acceptor in the catalytic mechanism. Residue Ser-351 is part of the active site. Lys-461 contributes to the substrate binding site.

This sequence belongs to the peptidase S13 family.

It carries out the reaction Preferential cleavage: (Ac)2-L-Lys-D-Ala-|-D-Ala. Also transpeptidation of peptidyl-alanyl moieties that are N-acyl substituents of D-alanine.. Inhibited by penicillin G. Its function is as follows. Carboxypeptidase. The polypeptide is Penicillin-sensitive carboxypeptidase A (pscA) (Dictyostelium discoideum (Social amoeba)).